We begin with the raw amino-acid sequence, 815 residues long: Protein pygopus (815 aa).

2 disordered regions span residues 1-107 (MTHN…QVSA) and 147-711 (GMGG…GPMG). A Nuclear localization signal motif is present at residues 39 to 45 (PKKRRKT). Residues 46-73 (SSAANSAAAVAAAAAAAAAANSMQQQQA) are compositionally biased toward low complexity. A compositionally biased stretch (pro residues) spans 74–86 (PPTPQDLLPPPPM). Positions 188-199 (RGMSPMHPHQMG) are enriched in low complexity. 2 stretches are compositionally biased toward gly residues: residues 230 to 248 (PMGGIAGMGGMSPMGGMGG) and 257 to 269 (GMGGLSPMGGGPN). Over residues 307-316 (LGPPSGPGPG) the composition is skewed to pro residues. 4 stretches are compositionally biased toward low complexity: residues 323–341 (GPQQQQQQPPQPPMNNGQM), 407–424 (SNNNGSNTSNASNNNQNP), 444–478 (PSVSSVASSSVPSPATPTLTPTSTATSMSTSVPTS), and 495–545 (GPSP…HQQH). Pro residues predominate over residues 569–580 (PQQPSHLGPPHP). The span at 602–621 (GGPGMHGGPAGMPPHMGGGP) shows a compositional bias: gly residues. Low complexity predominate over residues 622–636 (NPHMMGGPHGNAGPH). Over residues 640–656 (GHMGGVPGPGPGPGGMN) the composition is skewed to gly residues. The segment covering 663-675 (MSPHHGHPHHHHN) has biased composition (basic residues). The segment covering 678–711 (GGPGPNMFGGGGGGPMGPGGPMGNMGPMGGGPMG) has biased composition (gly residues). The segment at 747 to 805 (IYPCGMCHKEVNDNDEAVFCESGCNFFFHRTCVGLTEAAFQMLNKEVFAEWCCDKCVSS) adopts a PHD-type zinc-finger fold.

As to quaternary structure, binds to BCL9 via the PHD-type zinc finger motif, and thereby becomes part of the nuclear ARM/PAN complex. In terms of tissue distribution, ubiquitous throughout embryogenesis and larval development.

Its subcellular location is the nucleus. Involved in signal transduction through the Wnt pathway. The sequence is that of Protein pygopus (pygo) from Drosophila melanogaster (Fruit fly).